The sequence spans 1467 residues: Chromatin modification-related protein eaf1 (1467 aa).

Disordered stretches follow at residues 154–314 (PALA…QLEA), 329–402 (GDVT…SQVG), and 469–522 (PADM…EKDD). Polar residues-rich tracts occupy residues 155–174 (ALAT…TPAQ), 244–263 (SEDQ…NNTP), 330–339 (DVTTASSLSN), and 388–401 (PPAQ…QSQV). Positions 475–484 (APASASPESA) are enriched in low complexity. Positions 607–686 (LKRSVEPPRQ…EKKEAHASSM (80 aa)) constitute an HSA domain. Residues 877–935 (QSSQWTYAEDDELRRLVKEYSYNWSLISSCLTPSSQFTSGAERRTPWECFERWVGLEGL) form the Myb-like domain. The span at 970-979 (QQQQQQQQQQ) shows a compositional bias: low complexity. Disordered regions lie at residues 970-1058 (QQQQ…PAEF), 1113-1202 (GIPH…TSPD), 1216-1307 (QQRI…MGQP), and 1377-1467 (DGNF…IPSG). The span at 1162-1174 (GGPPMNGPIPPNP) shows a compositional bias: pro residues. Composition is skewed to low complexity over residues 1175 to 1186 (MAMKMMPQTGMP), 1216 to 1226 (QQRILQSRQQQ), and 1233 to 1253 (QQPQ…FGPQ). 2 stretches are compositionally biased toward polar residues: residues 1254–1271 (GSHS…TPNN) and 1428–1445 (LPQQ…SGSA). Over residues 1457–1467 (PHPPQAQIPSG) the composition is skewed to pro residues.

The protein belongs to the EAF1 family. As to quaternary structure, component of the NuA4 histone acetyltransferase complex.

The protein localises to the nucleus. Component of the NuA4 histone acetyltransferase complex which is involved in transcriptional activation of selected genes principally by acetylation of nucleosomal histone H4 and H2A. The NuA4 complex is also involved in DNA repair. In Aspergillus fumigatus (strain ATCC MYA-4609 / CBS 101355 / FGSC A1100 / Af293) (Neosartorya fumigata), this protein is Chromatin modification-related protein eaf1 (eaf1).